The following is a 261-amino-acid chain: MSGETPMCSIDLSEVKAKETRMAGRFRVSWYEQYIQPCVVELLGSALFIFIGCLSVIENSPDTGLLQPALAHGLALGLIIATLGNISGGHFNPAVSLAVTVIGGLKTMLLIPYWISQIFGGLIGAALAKVVSPEERFWNASGAAFAIVQEQEQVTEALGVEIILTILLVLAVCMGAVNEKTMGPLAPFSIGFSVIVDILAGGGISGACMNPARAFGPAVVAGYWDFHWIYWLGPLLAGLFVGLLIRLFIGDEKTRLILKSR.

The Cytoplasmic segment spans residues 1 to 36 (MSGETPMCSIDLSEVKAKETRMAGRFRVSWYEQYIQ). The helical transmembrane segment at 37 to 57 (PCVVELLGSALFIFIGCLSVI) threads the bilayer. Cys-53 carries the cysteine persulfide modification. Cys-53 bears the Cysteine sulfenic acid (-SOH) mark. The Extracellular portion of the chain corresponds to 58–84 (ENSPDTGLLQPALAHGLALGLIIATLG). Residues 85 to 105 (NISGGHFNPAVSLAVTVIGGL) form a helical membrane-spanning segment. An NPA 1 motif is present at residues 92–94 (NPA). Residues 106–107 (KT) lie on the Cytoplasmic side of the membrane. Residues 108 to 128 (MLLIPYWISQIFGGLIGAALA) form a helical membrane-spanning segment. At 129-156 (KVVSPEERFWNASGAAFAIVQEQEQVTE) the chain is on the extracellular side. A glycan (N-linked (GlcNAc...) asparagine) is linked at Asn-139. A helical membrane pass occupies residues 157 to 177 (ALGVEIILTILLVLAVCMGAV). At 178 to 183 (NEKTMG) the chain is on the cytoplasmic side. Residues 184–204 (PLAPFSIGFSVIVDILAGGGI) form a helical membrane-spanning segment. Over 205–228 (SGACMNPARAFGPAVVAGYWDFHW) the chain is Extracellular. An NPA 2 motif is present at residues 210–212 (NPA). Residues 229-249 (IYWLGPLLAGLFVGLLIRLFI) form a helical membrane-spanning segment. Residues 250–261 (GDEKTRLILKSR) are Cytoplasmic-facing.

This sequence belongs to the MIP/aquaporin (TC 1.A.8) family. In terms of processing, sulfenylation at Cys-53(C53-SOH) when hydrogen peroxide flows through the AQP8 channel, making it susceptible to hydrogen sulfide produced by CBS. Post-translationally, persulfidation at Cys-53 is required to gate AQP8 channel; under stress condition, hydrogen peroxide accumulates in the cell leading to CBS activation that produces hydrogen sulfide inducing persulfidation of oxidized Cys-53 (C53-SOH). N-glycosylated.

It localises to the cell membrane. The protein localises to the mitochondrion inner membrane. The protein resides in the apical cell membrane. It is found in the basolateral cell membrane. Its subcellular location is the smooth endoplasmic reticulum membrane. It catalyses the reaction H2O(in) = H2O(out). The enzyme catalyses H2O2(out) = H2O2(in). The catalysed reaction is formamide(out) = formamide(in). It carries out the reaction methylamine(out) = methylamine(in). Its activity is regulated as follows. Reversibly gated by a two-step sulfenylation-persulfidation process in cells undergoing diverse stresses. Functionally, channel that allows the facilitated permeation of water and uncharged molecules, such as hydrogen peroxide and the neutral form of ammonia (NH3), through cellular membranes such as plasma membrane, inner mitochondrial membrane and endoplasmic reticulum membrane of several tissues. The transport of ammonia neutral form induces a parallel transport of proton, at alkaline pH when the concentration of ammonia is high. However, it is unclear whether the transport of proton takes place via the aquaporin or via an endogenous pathway. Also, may transport ammonia analogs such as formamide and methylamine, a transport favourited at basic pH due to the increase of unprotonated (neutral) form, which is expected to favor diffusion. Does not transport urea or glycerol. The water transport mechanism is mercury- and copper-sensitive and passive in response to osmotic driving forces. At the canicular plasma membrane, mediates the osmotic transport of water toward the bile canaliculus and facilitates the cAMP-induced bile canalicular water secretion, a process involved in bile formation. In addition, mediates the hydrogen peroxide release from hepatocyte mitochondria that modulates the SREBF2-mediated cholesterol synthesis and facilitates the mitochondrial ammonia uptake which is metabolized into urea, mainly under glucagon stimulation. In B cells, transports the CYBB-generated hydrogen peroxide from the external leaflet of the plasma membrane to the cytosol to promote B cell activation and differentiation for signal amplification. In the small intestine and colon system, mediates water transport through mitochondria and apical membrane of epithelial cells. May play an important role in the adaptive response of proximal tubule cells to acidosis possibly facilitating mitochondrial ammonia transport. In Notomys alexis (Spinifex hopping mouse), this protein is Aquaporin-8.